Here is a 119-residue protein sequence, read N- to C-terminus: Inner membrane protein YijD (119 aa).

The Cytoplasmic portion of the chain corresponds to 1-8 (MKQANQDR). Residues 9 to 28 (GTLLLALVAGLSINGTFAAL) traverse the membrane as a helical segment. Topologically, residues 29-31 (FSS) are periplasmic. The chain crosses the membrane as a helical span at residues 32–50 (IVPFSVFPIISLVLTVYCL). At 51–61 (HQRYLNRTMPV) the chain is on the cytoplasmic side. Residues 62-84 (GLPGLAAACFILGVLLYSTVVRA) traverse the membrane as a helical segment. Residues 85–88 (EYPD) are Periplasmic-facing. The chain crosses the membrane as a helical span at residues 89–108 (IGSNFFPAVLSVIMVFWIGA). At 109–119 (KMRNRKQEVAE) the chain is on the cytoplasmic side.

The protein localises to the cell inner membrane. In Escherichia coli O6:H1 (strain CFT073 / ATCC 700928 / UPEC), this protein is Inner membrane protein YijD (yijD).